A 1119-amino-acid polypeptide reads, in one-letter code: SH3 and PX domain-containing protein 2A (1119 aa).

The PX domain maps to 4-128 (RTVLDVKVVD…RFFETKPDDI (125 aa)). 2 SH3 domains span residues 149–208 (MVLE…SQSG) and 249–308 (SREE…KLKD). 5 disordered regions span residues 388-429 (SSAT…PPRR), 494-595 (APSS…SNPA), 641-815 (SSDD…HESV), 914-941 (NLRSMSNPSPPIPSKPPGGFSKPTAMLN), and 957-1004 (RPQS…SSFT). Residues 445–504 (TVEAEYYTIAEFQSSISDGISFRGGQKADVIEKNSGGWWYVQIGDTEGWAPSSYIDKRKK) form the SH3 3 domain. Basic and acidic residues-rich tracts occupy residues 581–590 (PKPEPRKFEI) and 688–718 (GRAERHSSKLFSDESARNPKREPVMRKDVEI). Positions 779 to 802 (TASVVSSEDSTSSRSTSDLSSVYS) are enriched in low complexity. Positions 806 to 815 (RGGESDHESV) are enriched in basic and acidic residues. The 60-residue stretch at 812–871 (HESVLFRTTDAYERAQESELSFPAGVEVEVLEKQESGWWFVRWGSDEGWVPTFYLEPIKH) folds into the SH3 4 domain. Positions 1058 to 1119 (NLREVYVSIA…VPSNYLERKK (62 aa)) constitute an SH3 5 domain.

It belongs to the SH3PXD2 family. Tyrosine phosphorylated.

It localises to the cytoplasm. The protein localises to the cell projection. Its subcellular location is the podosome. Functionally, adapter protein involved in invadopodia and podosome formation and extracellular matrix degradation. This is SH3 and PX domain-containing protein 2A (sh3pxd2a) from Danio rerio (Zebrafish).